Reading from the N-terminus, the 101-residue chain is Small ribosomal subunit protein uS14 (101 aa).

Positions 1-26 are disordered; it reads MAKVSSIKKNESRKKKSQSLHNKRSA. Basic residues predominate over residues 11 to 26; the sequence is ESRKKKSQSLHNKRSA.

Belongs to the universal ribosomal protein uS14 family. Part of the 30S ribosomal subunit. Contacts proteins S3 and S10.

Its function is as follows. Binds 16S rRNA, required for the assembly of 30S particles and may also be responsible for determining the conformation of the 16S rRNA at the A site. The polypeptide is Small ribosomal subunit protein uS14 (Rickettsia felis (strain ATCC VR-1525 / URRWXCal2) (Rickettsia azadi)).